The sequence spans 604 residues: Inositol-3-phosphate synthase 1 (604 aa).

Positions 88, 89, 90, 91, 163, 198, 199, 210, 213, 251, 252, 253, 254, 303, 327, 328, 330, 361, 362, 363, 376, 456, 457, 485, and 486 each coordinate NAD(+).

The protein belongs to the myo-inositol 1-phosphate synthase family. The cofactor is NAD(+).

The enzyme catalyses D-glucose 6-phosphate = 1D-myo-inositol 3-phosphate. It functions in the pathway polyol metabolism; myo-inositol biosynthesis; myo-inositol from D-glucose 6-phosphate: step 1/2. In terms of biological role, key enzyme in myo-inositol biosynthesis pathway that catalyzes the conversion of glucose 6-phosphate to 1-myo-inositol 1-phosphate in a NAD-dependent manner. Rate-limiting enzyme in the synthesis of all inositol-containing compounds. De novo-synthesized myo-inositol is essential for incorporation into GPI (glycosylphosphatidylinositol) glycolipids during intra-erythrocytic development. This Plasmodium falciparum (isolate 3D7) protein is Inositol-3-phosphate synthase 1.